Reading from the N-terminus, the 189-residue chain is UPF0301 protein CAB604 (189 aa).

Belongs to the UPF0301 (AlgH) family.

This is UPF0301 protein CAB604 from Chlamydia abortus (strain DSM 27085 / S26/3) (Chlamydophila abortus).